We begin with the raw amino-acid sequence, 445 residues long: C4-dicarboxylate transport protein (445 aa).

8 consecutive transmembrane segments (helical) span residues 24 to 44 (VLYIQVLIAIVLGVLVGWLSP), 62 to 82 (LIKMVIAPIIFCTVVSGIAHI), 105 to 125 (FALILGLVVGNLLPVGHGLAA), 163 to 183 (GDILQVLLFAILFGFALMALG), 201 to 221 (FGVIAIVMKAAPVGAFGAMAF), 237 to 257 (LVALFYATAALFVFVVLGVIA), 322 to 342 (IYMTLATLFIAQALGIELSFS), and 370 to 390 (AGTLAAVNPALVPGMAIVFSI).

It belongs to the dicarboxylate/amino acid:cation symporter (DAACS) (TC 2.A.23) family.

The protein localises to the cell inner membrane. In terms of biological role, responsible for the transport of dicarboxylates such as succinate, fumarate, and malate from the periplasm across the membrane. This chain is C4-dicarboxylate transport protein, found in Rhodopseudomonas palustris (strain HaA2).